A 43-amino-acid polypeptide reads, in one-letter code: ORF7b protein (43 aa).

A helical membrane pass occupies residues 9–29; sequence FYLCFLAFLLFLVLIMLIIFW.

The protein localises to the host Golgi apparatus membrane. The protein resides in the host endosome membrane. The protein is ORF7b protein of Homo sapiens (Human).